A 260-amino-acid polypeptide reads, in one-letter code: Opacity protein opA58 (260 aa).

Residues 1–23 (MNPAPKKPSLLFSSLLFSSAAQA) form the signal peptide.

Belongs to the opacity porin family.

The protein localises to the cell outer membrane. In terms of biological role, implicated in a number of adherence functions. OPA proteins are implicated in pathogenesis and are subject to phase variation. In Neisseria gonorrhoeae, this protein is Opacity protein opA58 (opaJ).